A 100-amino-acid polypeptide reads, in one-letter code: Small ribosomal subunit protein bS18 (100 aa).

Residues 1–23 (MTFIRKPAGQAKPQKYSTDAYGR) are disordered.

Belongs to the bacterial ribosomal protein bS18 family. Part of the 30S ribosomal subunit. Forms a tight heterodimer with protein bS6.

In terms of biological role, binds as a heterodimer with protein bS6 to the central domain of the 16S rRNA, where it helps stabilize the platform of the 30S subunit. The sequence is that of Small ribosomal subunit protein bS18 from Endomicrobium trichonymphae.